A 100-amino-acid polypeptide reads, in one-letter code: Small ubiquitin-related modifier 1 (100 aa).

Residues 1–12 are compositionally biased toward basic and acidic residues; sequence MSANQEEDKKPG. Residues 1–21 form a disordered region; that stretch reads MSANQEEDKKPGDGGAHINLK. Positions 16–93 constitute a Ubiquitin-like domain; the sequence is AHINLKVKGQ…IDAMLHQTGG (78 aa). G93 participates in a covalent cross-link: Glycyl lysine isopeptide (Gly-Lys) (interchain with K-? in acceptor proteins).

This sequence belongs to the ubiquitin family. SUMO subfamily. As to quaternary structure, interacts with SAE2, SCE1, SIZ1 and MMS21. Interacts with HSFA2. Covalently attached to ABI5, FLD, GTE3, HSFA2 and ICE1.

It localises to the nucleus. Its subcellular location is the cytoplasm. Its function is as follows. Ubiquitin-like protein which can be covalently attached to target lysines as a monomer. Does not seem to be involved in protein degradation and may function as an antagonist of ubiquitin in the degradation process. Required for the massive protein sumoylation in the nucleus induced by heat shock and controlled by SIZ1. Involved in the regulation of the heat stress transcription factor HSFA2 in acquired thermotolerance. This is Small ubiquitin-related modifier 1 from Arabidopsis thaliana (Mouse-ear cress).